We begin with the raw amino-acid sequence, 350 residues long: MEVPNVKDFQWKRLAPLPSRRVYCSLLETGGQVYAIGGCDDNGVPMDCFEVYSPEADQWTSLPSLPTARAGVAITALGKRIMVIGGVGTNQLPVKVVEMYNIDEGKWKKRSVLREAAMGISVTAKDYRVYAAGGMGLDLRPHNYLQHYDMLKDMWVSLAPMPTPRYAATSFLRGSKIYVLGGRQSKYAVNAFEVFDIESRSWTKFPNIPCKRAFSSFVTLDNHLYSLGGLRQGRLYRQPKFLRTMDVFDMEQGGWLKMERSFFLKKRRADFVAGGLSGRVIVAGGLGNQPTVLETAEAFHPEKNKWEALPPMPTPRCACSSIVFKNCLLAVGGVSQGLSDAVEALFVSDS.

7 Kelch repeats span residues 1–31, 32–79, 81–127, 128–175, 176–222, 224–278, and 279–326; these read MEVP…ETGG, QVYA…ALGK, IMVI…AKDY, RVYA…LRGS, KIYV…TLDN, LYSL…GLSG, and RVIV…VFKN.

The sequence is that of Kelch domain-containing protein 8A (Klhdc8a) from Mus musculus (Mouse).